Here is a 453-residue protein sequence, read N- to C-terminus: Succinate-semialdehyde dehydrogenase (acetylating) (453 aa).

NADP(+) is bound at residue 188 to 193; sequence ATGGAG. Residue Cys242 is part of the active site.

Homodimer.

The catalysed reaction is succinate semialdehyde + NADP(+) + CoA = succinyl-CoA + NADPH + H(+). Functionally, catalyzes the reduction of succinate semialdehyde to succinyl-CoA. The enzyme is specific for succinate semialdehyde and succinyl-CoA, and only shows low activity with palmitoyl-CoA. There is no activity with NAD(+) as cosubstrate. This Clostridium kluyveri (strain ATCC 8527 / DSM 555 / NBRC 12016 / NCIMB 10680 / K1) protein is Succinate-semialdehyde dehydrogenase (acetylating) (sucD).